The primary structure comprises 532 residues: Flavin-containing monooxygenase 1 (532 aa).

The residue at position 2 (Ala2) is an N-acetylalanine. The Lumenal portion of the chain corresponds to Ala2–Pro510. Residues Gly9–Ser13, Glu32, Leu40–Trp41, and Asn61–Ser62 contribute to the FAD site. NADP(+) is bound by residues Ser60–Asn61 and Ser195–Asp198. Residues Phe511–Phe531 traverse the membrane as a helical segment. Position 532 (Leu532) is a topological domain, cytoplasmic.

The protein belongs to the FMO family. Requires FAD as cofactor. As to expression, liver.

The protein resides in the endoplasmic reticulum membrane. The enzyme catalyses hypotaurine + NADPH + O2 + H(+) = taurine + NADP(+) + H2O. It catalyses the reaction hypotaurine + NADH + O2 + H(+) = taurine + NAD(+) + H2O. It carries out the reaction trimethylamine + NADPH + O2 = trimethylamine N-oxide + NADP(+) + H2O. The catalysed reaction is N,N-dimethylaniline + NADPH + O2 + H(+) = N,N-dimethylaniline N-oxide + NADP(+) + H2O. Broad spectrum monooxygenase that catalyzes the oxygenation of a wide variety of nitrogen- and sulfur-containing compounds including xenobiotics. Catalyzes the S-oxygenation of hypotaurine to produce taurine, an organic osmolyte involved in cell volume regulation as well as a variety of cytoprotective and developmental processes. In vitro, catalyzes the N-oxygenation of trimethylamine (TMA) to produce trimethylamine N-oxide (TMAO) and could therefore participate to the detoxification of this compound that is generated by the action of gut microbiota from dietary precursors such as choline, choline containing compounds, betaine or L-carnitine. This chain is Flavin-containing monooxygenase 1 (FMO1), found in Canis lupus familiaris (Dog).